A 277-amino-acid polypeptide reads, in one-letter code: Glycerol-3-phosphate acyltransferase (277 aa).

The next 5 membrane-spanning stretches (helical) occupy residues 3–23, 55–75, 79–99, 111–131, and 155–175; these read LFIF…AIIV, IMVM…AKFL, PVTV…PVFF, IGAL…TWLL, and LILV…ILVL. A disordered region spans residues 207–277; the sequence is SPATSAEQEF…PKTKTVKEKE (71 aa). The segment covering 216-239 has biased composition (basic and acidic residues); sequence FPGKEVIDTNIDETEKTEQAEAVK. Composition is skewed to basic residues over residues 240–253 and 262–271; these read KPKV…AKKT and KPKSTKPKTK.

Belongs to the PlsY family. As to quaternary structure, probably interacts with PlsX.

It is found in the cell inner membrane. It catalyses the reaction an acyl phosphate + sn-glycerol 3-phosphate = a 1-acyl-sn-glycero-3-phosphate + phosphate. Its pathway is lipid metabolism; phospholipid metabolism. Its function is as follows. Catalyzes the transfer of an acyl group from acyl-phosphate (acyl-PO(4)) to glycerol-3-phosphate (G3P) to form lysophosphatidic acid (LPA). This enzyme utilizes acyl-phosphate as fatty acyl donor, but not acyl-CoA or acyl-ACP. The polypeptide is Glycerol-3-phosphate acyltransferase (Legionella pneumophila subsp. pneumophila (strain Philadelphia 1 / ATCC 33152 / DSM 7513)).